The sequence spans 339 residues: DNA-directed RNA polymerase subunit alpha (339 aa).

An alpha N-terminal domain (alpha-NTD) region spans residues 1 to 233 (MVREEVAGST…DLFLPFLHAE (233 aa)). An alpha C-terminal domain (alpha-CTD) region spans residues 264-339 (KKGIPLNCIF…IDLLKNKLSF (76 aa)).

It belongs to the RNA polymerase alpha chain family. In plastids the minimal PEP RNA polymerase catalytic core is composed of four subunits: alpha, beta, beta', and beta''. When a (nuclear-encoded) sigma factor is associated with the core the holoenzyme is formed, which can initiate transcription.

Its subcellular location is the plastid. The protein resides in the chloroplast. It carries out the reaction RNA(n) + a ribonucleoside 5'-triphosphate = RNA(n+1) + diphosphate. Its function is as follows. DNA-dependent RNA polymerase catalyzes the transcription of DNA into RNA using the four ribonucleoside triphosphates as substrates. The polypeptide is DNA-directed RNA polymerase subunit alpha (Festucopsis serpentini).